Consider the following 99-residue polypeptide: Elongin-C (99 aa).

The residue at position 2 (Ser2) is an N-acetylserine. Phosphoserine is present on Ser2.

Belongs to the SKP1 family. Heterodimer with ELA1. Component of a CRL3 E3 ubiquitin ligase complex consisting of the cullin CUL3, the linker protein ELC1, the substrate receptor ELA1, and the RING protein HRT1. Interacts with CIN5. Interacts with PCL6. Interacts with SNF4. Interacts with the large RNA polymerase II subunit RPO21 in a manner dependent on DEF1. Interacts with DEF1. Interacts with RAD7. Interacts with RAD16.

The protein resides in the cytoplasm. Its subcellular location is the nucleus. As part of the CRL3 E3 ubiquitin ligase complex; polyubiquitylates monoubiquitylated RNA polymerase II subunit RPO21 to trigger its proteolysis; plays a role in global genomic repair. Prevents degradation of interacting proteins like PCL6 by the proteasome. The chain is Elongin-C (ELC1) from Saccharomyces cerevisiae (strain ATCC 204508 / S288c) (Baker's yeast).